Consider the following 620-residue polypeptide: MYEWKLNEIVDSGVCARCGTCTIVCPNGILTFDERPKLIDECLRKGHGMCFEVCPRVSSAKYQIKIREKFYEKYYYAKSDIEGQDGGVVTAFLKYLLENGKIDGAIVVGDECWKPVSLVVQNAEDLLKTAKSKYAISTLDALRKAGEMGLEKVAVVGLPCQINGLRKLQYFPYHAKHDLELGRNGKPVKLPKIEYLIGLFCTEKFRYDNMKEVLSKHGIDIEKVEKFDIKKGKLLVYVNGEKKEFDLKEFEICSGCKMCRDFDAEMADVSVGCVGSPDGYSTIIIRTEKGEEIKNAVELKEGVNLEEIEKLRQLKLKRFKKEVERRRENNEYVSFYWTADYGGIGKRADGTYFIRVRAKPGGWYKPEEIKEILDIAEEYNAKIKVTDRAGYELHGISGFDVEDIVLRLREKGLLTGSEGPLVRATLACPGGGNCSSGLVDTTELARIIEDNFKERPAPYKFKIAISGCPNGCVRPQVHDIGIAGVKYPKVNEEKCNGCGRCAEVCKVEAIDIRGETSYTNYNVCVGCGKCIKNCPNEAREVKEEGYLVYVGGKTGREVVEGVKMKLMSVDEIINFIDKVLVVYGKYAEKPQRERLAAVMKRVGYGKFLEEVKELMKKEIC.

In terms of domain architecture, 4Fe-4S ferredoxin-type 1 spans 6–35; sequence LNEIVDSGVCARCGTCTIVCPNGILTFDER. The [4Fe-4S] cluster site is built by cysteine 15, cysteine 18, cysteine 21, cysteine 25, cysteine 428, cysteine 434, cysteine 468, cysteine 472, cysteine 495, cysteine 498, cysteine 501, cysteine 505, cysteine 524, cysteine 527, cysteine 530, and cysteine 534. Cysteine 472 contributes to the siroheme binding site. 4Fe-4S ferredoxin-type domains are found at residues 486-515 and 520-544; these read KYPK…IRGE and NYNV…VKEE.

It belongs to the nitrite and sulfite reductase 4Fe-4S domain family. The cofactor is [4Fe-4S] cluster. Siroheme is required as a cofactor.

It carries out the reaction 3 oxidized coenzyme F420-(gamma-L-Glu)(n) + hydrogen sulfide + 3 H2O + 2 H(+) = 3 reduced coenzyme F420-(gamma-L-Glu)(n) + sulfite. Functionally, catalyzes the reduction of sulfite to sulfide using reduced F420 as the electron source. Involved in sulfite detoxification and assimilation. Cannot use NADH or NADPH. The polypeptide is Coenzyme F420-dependent sulfite reductase (Methanocaldococcus jannaschii (strain ATCC 43067 / DSM 2661 / JAL-1 / JCM 10045 / NBRC 100440) (Methanococcus jannaschii)).